Reading from the N-terminus, the 440-residue chain is Probable aldose 1-epimerase ARB_05372 (440 aa).

An N-terminal signal peptide occupies residues Met1–Ala24. 5 N-linked (GlcNAc...) asparagine glycosylation sites follow: Asn32, Asn38, Asn43, Asn68, and Asn112. Asn125 to Arg126 contributes to the substrate binding site. N-linked (GlcNAc...) asparagine glycosylation is found at Asn129, Asn147, Asn163, Asn171, and Asn199. His233 (proton donor) is an active-site residue. 4 N-linked (GlcNAc...) asparagine glycosylation sites follow: Asn243, Asn275, Asn281, and Asn306. Asp311 is a substrate binding site. N-linked (GlcNAc...) asparagine glycosylation is found at Asn321, Asn337, Asn365, and Asn385. The active-site Proton acceptor is Glu401.

This sequence belongs to the aldose epimerase family. As to quaternary structure, monomer.

The protein resides in the secreted. The enzyme catalyses alpha-D-glucose = beta-D-glucose. It functions in the pathway carbohydrate metabolism; hexose metabolism. Its function is as follows. Mutarotase converts alpha-aldose to the beta-anomer. It is active on D-glucose, L-arabinose, D-xylose, D-galactose, maltose and lactose. This chain is Probable aldose 1-epimerase ARB_05372, found in Arthroderma benhamiae (strain ATCC MYA-4681 / CBS 112371) (Trichophyton mentagrophytes).